The following is a 263-amino-acid chain: 5'-nucleotidase SurE (263 aa).

A divalent metal cation contacts are provided by D8, D9, S40, and N93.

Belongs to the SurE nucleotidase family. It depends on a divalent metal cation as a cofactor.

It localises to the cytoplasm. It catalyses the reaction a ribonucleoside 5'-phosphate + H2O = a ribonucleoside + phosphate. Its function is as follows. Nucleotidase that shows phosphatase activity on nucleoside 5'-monophosphates. This Beijerinckia indica subsp. indica (strain ATCC 9039 / DSM 1715 / NCIMB 8712) protein is 5'-nucleotidase SurE.